Consider the following 233-residue polypeptide: PEP2-like protein NECHADRAFT_97050 (233 aa).

It belongs to the PEP2 family.

In terms of biological role, may contribute to the ability of the fungus to cause disease on pea plants. The protein is PEP2-like protein NECHADRAFT_97050 of Fusarium vanettenii (strain ATCC MYA-4622 / CBS 123669 / FGSC 9596 / NRRL 45880 / 77-13-4) (Fusarium solani subsp. pisi).